The chain runs to 354 residues: Selenide, water dikinase (354 aa).

Cys-23 is an active-site residue. ATP contacts are provided by residues Lys-26 and 54-56 (TSD). Position 57 (Asp-57) interacts with Mg(2+). ATP contacts are provided by residues Asp-74, Asp-97, and 145-147 (GHS). Asp-97 is a binding site for Mg(2+). Asp-233 provides a ligand contact to Mg(2+).

The protein belongs to the selenophosphate synthase 1 family. Class I subfamily. As to quaternary structure, homodimer. Requires Mg(2+) as cofactor.

The enzyme catalyses hydrogenselenide + ATP + H2O = selenophosphate + AMP + phosphate + 2 H(+). Functionally, synthesizes selenophosphate from selenide and ATP. The protein is Selenide, water dikinase of Burkholderia pseudomallei (strain K96243).